The chain runs to 283 residues: Endochitinase At2g43620 (283 aa).

An N-terminal signal peptide occupies residues 1–28; sequence MATLRAMLKNAFILFLFTLTIMAKTVFS. A Chitin-binding type-1 domain is found at 29–66; sequence QQCGTTGCAANLCCSRYGYCGTTDAYCGTGCRSGPCSS. 4 disulfide bridges follow: Cys31–Cys42, Cys36–Cys48, Cys41–Cys55, and Cys59–Cys64. A catalytic region spans residues 88 to 283; the sequence is DTIENVVTPA…GITPGANLSC (196 aa). Residue Glu150 is the Proton donor of the active site. Asn280 carries N-linked (GlcNAc...) asparagine glycosylation.

The protein belongs to the glycosyl hydrolase 19 family. Chitinase class I subfamily.

The enzyme catalyses Random endo-hydrolysis of N-acetyl-beta-D-glucosaminide (1-&gt;4)-beta-linkages in chitin and chitodextrins.. The polypeptide is Endochitinase At2g43620 (Arabidopsis thaliana (Mouse-ear cress)).